A 161-amino-acid chain; its full sequence is 4-hydroxybenzoyl-CoA reductase subunit gamma (161 aa).

Positions 3–79 (NILRLTLNGR…GKKVETVESL (77 aa)) constitute a 2Fe-2S ferredoxin-type domain. [2Fe-2S] cluster is bound by residues cysteine 41, cysteine 46, cysteine 49, cysteine 61, cysteine 100, cysteine 103, cysteine 135, and cysteine 137.

Heterohexamer of two alpha, two beta and two gamma subunits. It depends on [2Fe-2S] cluster as a cofactor.

The enzyme catalyses oxidized 2[4Fe-4S]-[ferredoxin] + benzoyl-CoA + H2O = 4-hydroxybenzoyl-CoA + reduced 2[4Fe-4S]-[ferredoxin] + 2 H(+). Its activity is regulated as follows. Inactivated by low concentrations of cyanide in vitro. Functionally, component of a complex that catalyzes the reductive dehydroxylation of 4-hydroxybenzoyl-CoA to benzoyl-CoA. Reaction is not reversible. Is a key enzyme in the anaerobic degradation of phenolic compounds. This chain is 4-hydroxybenzoyl-CoA reductase subunit gamma (hcrC), found in Thauera aromatica.